A 267-amino-acid polypeptide reads, in one-letter code: 4-hydroxy-2-oxo-heptane-1,7-dioate aldolase (267 aa).

The Proton acceptor role is filled by H45. Substrate is bound at residue Q147. An a divalent metal cation-binding site is contributed by E149. 2 residues coordinate substrate: A174 and D175. D175 is an a divalent metal cation binding site.

Belongs to the HpcH/HpaI aldolase family. As to quaternary structure, homohexamer; trimer of dimers. Requires a divalent metal cation as cofactor.

It carries out the reaction 4-hydroxy-2-oxoheptanedioate = succinate semialdehyde + pyruvate. Its pathway is aromatic compound metabolism; 4-hydroxyphenylacetate degradation; pyruvate and succinate semialdehyde from 4-hydroxyphenylacetate: step 7/7. In terms of biological role, catalyzes the reversible retro-aldol cleavage of 4-hydroxy-2-ketoheptane-1,7-dioate (HKHD) to pyruvate and succinic semialdehyde. The protein is 4-hydroxy-2-oxo-heptane-1,7-dioate aldolase of Shigella flexneri.